A 244-amino-acid chain; its full sequence is Putative lipoprotein LprA (244 aa).

A signal peptide spans 1-24 (MKHPPCSVVAAATAILAVVLAIGG). C25 is lipidated: N-palmitoyl cysteine. C25 carries the S-diacylglycerol cysteine lipid modification.

The protein belongs to the LppX/LprAFG lipoprotein family.

The protein localises to the cell membrane. This is Putative lipoprotein LprA (lprA) from Mycobacterium tuberculosis (strain CDC 1551 / Oshkosh).